Reading from the N-terminus, the 97-residue chain is uncharacterized protein (97 aa).

The N-terminal stretch at 1–21 (MNKKFSISLLSTILAFLLVLG) is a signal peptide. C22 is lipidated: N-palmitoyl cysteine. A lipid anchor (S-diacylglycerol cysteine) is attached at C22.

This sequence to B.burgdorferi BBD15.

Its subcellular location is the cell membrane. This is an uncharacterized protein from Borreliella burgdorferi (strain ATCC 35210 / DSM 4680 / CIP 102532 / B31) (Borrelia burgdorferi).